The primary structure comprises 247 residues: Cell division protein ZapD (247 aa).

The protein belongs to the ZapD family. Interacts with FtsZ.

Its subcellular location is the cytoplasm. In terms of biological role, cell division factor that enhances FtsZ-ring assembly. Directly interacts with FtsZ and promotes bundling of FtsZ protofilaments, with a reduction in FtsZ GTPase activity. The chain is Cell division protein ZapD from Shigella boydii serotype 18 (strain CDC 3083-94 / BS512).